A 226-amino-acid chain; its full sequence is MSFFGKMFGGKKEVAPTTGEAIQKLRETENMLIKKQEFLEAKIEDELNIARKNASKNKRVALQALKKKKRLEKQLQQIDGTLSTIEMQREALESANTNTAVLTTMKNAADALKRAHQNMDVDKVHDMMDDIAEQQDVAREISDAISNPVAFGADLDDEDLERELDELEQENFDKEIIGIPEPTPTLPEAPTEDLPEKAKEKKKATTTTAVEDDDDPDMKQLLSWSN.

Residues 22–88 adopt a coiled-coil conformation; that stretch reads IQKLRETENM…DGTLSTIEMQ (67 aa). Positions 169 to 226 are disordered; the sequence is QENFDKEIIGIPEPTPTLPEAPTEDLPEKAKEKKKATTTTAVEDDDDPDMKQLLSWSN.

The protein belongs to the SNF7 family. As to quaternary structure, homopolymer; forms elongated striated filaments of uniform ~10nm width. Monomers interact in a staggered arrangement mediated by complementary charged electrostatic surfaces. Interacts with l(2)gd1 (via DM14 domains 1 and 3); the interaction is direct and blocks access to the surface involved in homopolymerization. This interaction may be required for the ESCRT-III complex role in multivesicular body formation. In terms of tissue distribution, expressed at considerably higher levels in testis than in ovary. Expressed in midgut, eye, mouthparts and male accessory gland.

The protein resides in the endosome. The protein localises to the multivesicular body. Its subcellular location is the midbody. With respect to regulation, may be regulated by aurB/Aurora kinase B-dependent phosphorylation. Its function is as follows. Probable core polymerisation component of the endosomal sorting required for transport (ESCRT) III complex involved in multiple cellular processes requiring the outward bending of membranes, including vesicle budding, membrane repair and cytokinesis. The ESCRT pathway involves 4 complexes (ESCRT-0, -I, -II and -III) that sequentially assemble on the cytoplasmic side of membranes and induce membrane remodeling, budding and scission. As part of the ESCRT-III complex, involved in the budding of intraluminal vesicles (ILVs) into endosomes to form multivesicular bodies (MVBs), which target their contents for degradation via the endolysosomal pathway. Involved in regulation of signal transduction pathways, including the Notch and BMP/decapentaplegic (dpp) pathways, by sequestering the intracellular domains of activated receptors into ILVs, isolating them from the cytoplasm and targeting them for lysosomal degradation. Involved in targeting ubiquitilated proteins, such as mono-ubiquitilanated N/Notch, to MVBs for degradation. Plays a role in wing development by regulating Notch signaling. Involved in abscission of germline cells during oogenesis. Involved in spermiogenesis. Required for efficient cytoplasmic isolation and abscission during cytokinesis of epithelial sensory organ precursor cells. May be involved in septate junction remodeling and maintenance. This chain is Charged multivesicular body protein 4, found in Drosophila melanogaster (Fruit fly).